The sequence spans 334 residues: Adenine deaminase (334 aa).

Zn(2+) contacts are provided by histidine 17, histidine 19, and histidine 197. Residue glutamate 200 is the Proton donor of the active site. Position 278 (aspartate 278) interacts with Zn(2+). Residue aspartate 279 coordinates substrate.

Belongs to the metallo-dependent hydrolases superfamily. Adenosine and AMP deaminases family. Adenine deaminase type 2 subfamily. The cofactor is Zn(2+).

The enzyme catalyses adenine + H2O + H(+) = hypoxanthine + NH4(+). Functionally, catalyzes the hydrolytic deamination of adenine to hypoxanthine. Plays an important role in the purine salvage pathway and in nitrogen catabolism. The sequence is that of Adenine deaminase from Rhodospirillum rubrum (strain ATCC 11170 / ATH 1.1.1 / DSM 467 / LMG 4362 / NCIMB 8255 / S1).